Here is a 141-residue protein sequence, read N- to C-terminus: MKQKIILWIGALLLLTAGTGCEKNKDYEVPTQLTGTRWELAGIVDAKTGKITPLAPKGCYGFKFISETEAKGGTVLNQMTVHLTTPPFIGIVTMIGDEENGDAALFYRIIKTLESYTWEKNELKFFYDNKQYYLLYKYSKP.

The N-terminal stretch at 1–20 is a signal peptide; that stretch reads MKQKIILWIGALLLLTAGTG. Cys21 is lipidated: N-palmitoyl cysteine. Cys21 carries S-diacylglycerol cysteine lipidation.

The protein resides in the cell membrane. This Tannerella forsythia (strain ATCC 43037 / JCM 10827 / CCUG 21028 A / KCTC 5666 / FDC 338) (Bacteroides forsythus) protein is Putative lipoprotein Tanf_09445.